The primary structure comprises 422 residues: MKKFRIQGPCSLSGEVMISGSKNAALPILFSTLLSEEPIELKNIPELKDIDTTLNLLKQLGVKAKYQPPDSIMIDAKAVNHFCAPYELVKTMRASIWALGPLVARFGRGQVSLPGGCAIGARPVDLHIFGLKQLGAKIQIEEGYIKASVEGRLKGAHIVMDKVSVGATLTVMSAATLAEGTSIIENVAREPEIVDTANFLNILGANIQGAGTDKIVVEGVKRLRGGAYSIMPDRIETGTFLVAGAVSRGKVVCRHTQPATLEAVLAKLHEAGAQIEVGKDWISLDMKGKRPKAVNVRTTPYPGFPTDMQAQFTLLNIVATGTGVITETIFENRFMHVPELIRMGAQVKIESNTVICHGVERLSGAGVMATDLRASASLVLAGCIAQGITTVERIYHIDRGYECIENKLRKLGAYIERIQGAQ.

22–23 (KN) serves as a coordination point for phosphoenolpyruvate. Arg-93 serves as a coordination point for UDP-N-acetyl-alpha-D-glucosamine. The active-site Proton donor is the Cys-117. A 2-(S-cysteinyl)pyruvic acid O-phosphothioketal modification is found at Cys-117. UDP-N-acetyl-alpha-D-glucosamine is bound by residues 122-126 (RPVDL), 162-165 (KVSV), Asp-307, and Ile-329.

Belongs to the EPSP synthase family. MurA subfamily.

The protein resides in the cytoplasm. The catalysed reaction is phosphoenolpyruvate + UDP-N-acetyl-alpha-D-glucosamine = UDP-N-acetyl-3-O-(1-carboxyvinyl)-alpha-D-glucosamine + phosphate. It functions in the pathway cell wall biogenesis; peptidoglycan biosynthesis. In terms of biological role, cell wall formation. Adds enolpyruvyl to UDP-N-acetylglucosamine. This is UDP-N-acetylglucosamine 1-carboxyvinyltransferase from Hamiltonella defensa subsp. Acyrthosiphon pisum (strain 5AT).